Reading from the N-terminus, the 305-residue chain is Probable aspartoacylase (305 aa).

Zn(2+) is bound by residues histidine 13 and glutamate 16. Residues arginine 55 and 62–63 (NR) contribute to the substrate site. Histidine 105 provides a ligand contact to Zn(2+). Residues glutamate 163 and tyrosine 273 each coordinate substrate.

The protein belongs to the AspA/AstE family. Aspartoacylase subfamily. It depends on Zn(2+) as a cofactor.

The catalysed reaction is an N-acyl-L-aspartate + H2O = a carboxylate + L-aspartate. This chain is Probable aspartoacylase, found in Prochlorococcus marinus (strain NATL2A).